A 358-amino-acid chain; its full sequence is D-xylulose reductase A (358 aa).

Zn(2+) is bound by residues Cys47, His72, and Glu73. 182 to 187 (GAGPVG) is an NAD(+) binding site.

The protein belongs to the zinc-containing alcohol dehydrogenase family. The cofactor is Zn(2+).

It catalyses the reaction xylitol + NAD(+) = D-xylulose + NADH + H(+). It functions in the pathway carbohydrate degradation; L-arabinose degradation via L-arabinitol; D-xylulose 5-phosphate from L-arabinose (fungal route): step 4/5. Its function is as follows. Xylitol dehydrogenase which catalyzes the conversion of xylitol to D-xylulose. Xylose is a major component of hemicelluloses such as xylan. Most fungi utilize D-xylose via three enzymatic reactions, xylose reductase (XR), xylitol dehydrogenase (XDH), and xylulokinase, to form xylulose 5-phosphate, which enters pentose phosphate pathway. This is D-xylulose reductase A (xdhA) from Aspergillus oryzae (strain ATCC 42149 / RIB 40) (Yellow koji mold).